A 334-amino-acid chain; its full sequence is Holliday junction branch migration complex subunit RuvB (334 aa).

The large ATPase domain (RuvB-L) stretch occupies residues 1-182 (MDERLVSSEA…FGVMSRLEYY (182 aa)). Residues Leu-21, Arg-22, Gly-63, Lys-66, Thr-67, Thr-68, 129–131 (EDF), Arg-172, Tyr-182, and Arg-219 contribute to the ATP site. A Mg(2+)-binding site is contributed by Thr-67. The interval 183 to 253 (TQEELADIVT…ISQNALERLQ (71 aa)) is small ATPAse domain (RuvB-S). The interval 256-334 (RLGLDHIDHK…HFQMEAPRYD (79 aa)) is head domain (RuvB-H). Residues Arg-311 and Arg-316 each contribute to the DNA site.

This sequence belongs to the RuvB family. Homohexamer. Forms an RuvA(8)-RuvB(12)-Holliday junction (HJ) complex. HJ DNA is sandwiched between 2 RuvA tetramers; dsDNA enters through RuvA and exits via RuvB. An RuvB hexamer assembles on each DNA strand where it exits the tetramer. Each RuvB hexamer is contacted by two RuvA subunits (via domain III) on 2 adjacent RuvB subunits; this complex drives branch migration. In the full resolvosome a probable DNA-RuvA(4)-RuvB(12)-RuvC(2) complex forms which resolves the HJ. Homohexamer which interacts with RecU.

The protein localises to the cytoplasm. The enzyme catalyses ATP + H2O = ADP + phosphate + H(+). Its function is as follows. The RuvA-RuvB-RuvC complex processes Holliday junction (HJ) DNA during genetic recombination and DNA repair, while the RuvA-RuvB complex plays an important role in the rescue of blocked DNA replication forks via replication fork reversal (RFR). RuvA specifically binds to HJ cruciform DNA, conferring on it an open structure. The RuvB hexamer acts as an ATP-dependent pump, pulling dsDNA into and through the RuvAB complex. RuvB forms 2 homohexamers on either side of HJ DNA bound by 1 or 2 RuvA tetramers; 4 subunits per hexamer contact DNA at a time. Coordinated motions by a converter formed by DNA-disengaged RuvB subunits stimulates ATP hydrolysis and nucleotide exchange. Immobilization of the converter enables RuvB to convert the ATP-contained energy into a lever motion, pulling 2 nucleotides of DNA out of the RuvA tetramer per ATP hydrolyzed, thus driving DNA branch migration. The RuvB motors rotate together with the DNA substrate, which together with the progressing nucleotide cycle form the mechanistic basis for DNA recombination by continuous HJ branch migration. Branch migration allows RuvC to scan DNA until it finds its consensus sequence, where it cleaves and resolves cruciform DNA. This Bacillus subtilis (strain 168) protein is Holliday junction branch migration complex subunit RuvB.